Here is a 171-residue protein sequence, read N- to C-terminus: MSKIGLFVGTTTGKTEEAAEKIKEEFGGDDVVTIHDISEASPEDFDGYQNVIIGCPTWDVGELQSDWSGFYSEELDNVKFTGKKVAYFGTGDQIGYADNFQDAMGILEEKITGLGGTTIGSWSTEGYDHEDSKAVKNGKFVGLALDDDNQADLTDERIKEWVKQLKTEFGV.

Residues 4–166 (IGLFVGTTTG…RIKEWVKQLK (163 aa)) enclose the Flavodoxin-like domain.

The protein belongs to the flavodoxin family. FMN serves as cofactor.

In terms of biological role, low-potential electron donor to a number of redox enzymes. In Trichodesmium erythraeum (strain IMS101), this protein is Flavodoxin (fld).